We begin with the raw amino-acid sequence, 69 residues long: Toxin CSTX-11 (69 aa).

4 disulfides stabilise this stretch: Cys6–Cys21, Cys13–Cys30, Cys20–Cys47, and Cys32–Cys45.

In terms of tissue distribution, expressed by the venom gland.

It localises to the secreted. It is found in the target cell membrane. In terms of biological role, spider venom toxin that shows calcium channel blocking activity and exhibits cytolytic activity by affecting the outer leaflet curvature and/or pore formation across the membrane. It blocks L-type calcium channels (Cav1/CACNA1) in mammalian neurons at nanomolar concentrations. Furthermore, it produces a slow voltage-independent block of mid/low and high voltage-activated calcium channels in cockroach neurons. Potassium ions, histamine, M-ctenitoxin-Cs1a (AC P83619), CSTX-9 (AC P58604), and CSTX-13 (AC P83919) synergistically increase the insecticidal activity of this toxin. In vivo, it causes paralysis in blow flies and provokes death in drosophila. This chain is Toxin CSTX-11, found in Cupiennius salei (American wandering spider).